Reading from the N-terminus, the 233-residue chain is DNA-directed RNA polymerase I subunit RPA34 (233 aa).

Phosphoserine occurs at positions 10, 12, 14, and 60. Residues 179 to 191 show a composition bias toward basic and acidic residues; that stretch reads DFHVAEEVKENKK. Residues 179-233 form a disordered region; sequence DFHVAEEVKENKKEPKKRSHHDDEEESSEKKKKKKEKREKREKKDKKDKKKKHRD. The span at 208-233 shows a compositional bias: basic residues; sequence KKKKKKEKREKREKKDKKDKKKKHRD.

Belongs to the eukaryotic RPA34 RNA polymerase subunit family. In terms of assembly, component of the RNA polymerase I (Pol I) complex consisting of 14 subunits: RPA135, RPA190, RPC40, RPA14, RPB5, RPO26, RPA43, RPB8, RPA12, RPB10, RPC19, RPC10, RPA49 and RPA34. The complex is composed of a horseshoe-shaped core containing ten subunits (RPA135, RPA190, RPB5, RPO26, RPB8, RPB10, RPC10, RPA12, RPC19 and RPC40) where RPA135 and RPA190 form the DNA-binding cleft. Outside of the core, RPA14 and RPA43 form the stalk that mediates interactions with transcription initiation factors and newly synthesized RNA. Forms a TFIIF-like heterodimer with RPA49; the heterodimer formed by RPA34 and RPA49 can be dissociated from the Pol I core giving rise to a 12 subunit form A* of Pol I (formerly called pol A) that shows impaired transcript elongation activity and increased sensitivity to alpha-amanitin. The heterodimer formed by RPA34 and RPA49 stabilizes subunit RPA12 and stimulates RPA12-dependent RNA cleavage.

The protein resides in the nucleus. It localises to the nucleolus. DNA-dependent RNA polymerases catalyze the transcription of DNA into RNA using the four ribonucleoside triphosphates as substrates. Component of RNA polymerase I (Pol I) which synthesizes ribosomal RNA precursors. Besides, RNA polymerase I has intrinsic RNA cleavage activity. The heterodimer formed by RPA34 and RPA49 stimulates transcript elongation by Pol I. The polypeptide is DNA-directed RNA polymerase I subunit RPA34 (RPA34) (Saccharomyces cerevisiae (strain ATCC 204508 / S288c) (Baker's yeast)).